The chain runs to 354 residues: Kelch domain-containing protein 8B (354 aa).

8 Kelch repeats span residues 1–31 (MATG…FQDG), 32–79 (HLLV…VLGK), 81–127 (VLVV…ERDG), 128–175 (MVYA…LHGN), 176–222 (KIYV…MAEG), 224–281 (VFSL…SLGD), 282–329 (HVVA…QAGP), and 331–354 (LFAI…RDGV).

The protein localises to the cytoplasm. Its subcellular location is the midbody. Involved in pinching off the separated nuclei at the cleavage furrow and in cytokinesis. Required for mitotic integrity and maintenance of chromosomal stability. Protects cells against mitotic errors, centrosomal amplification, micronucleus formation and aneuploidy. Plays a key role of midbody function involving abscission of the daughter cells during cytokinesis and appropriate chromosomal and nuclear segregation into the daughter cells. The polypeptide is Kelch domain-containing protein 8B (KLHDC8B) (Bos taurus (Bovine)).